Consider the following 367-residue polypeptide: MPRITQEISYNCDYGDNTFNLAIDIGGTLAKVVFSPIHSNRLMFYTIETEKIDKFMELLHSIIKEHNNGCYRMTHIIATGGGAFKFYDLLYENFPQIKGISRFEEMEGLIHGLDFFIHEIPDEVFTYNDQDGERIIPTSSGTMDSKAIYPYLLVNIGSGVSILKVTEPNNFSRVGGSSLGGGTLWGLLSLITGAQTYDQMLDWAQEGDNSSVDMLVGDIYGTDYNKIGLKSSAIASSFGKVFQNRMTSNKSLENNENKLYSSHESIEKNNGQMFKNPDICKSLLFAISNNIGQIAYLQAKINNIQNIYFGGSYTRGHLTTMNTLSYAINFWSQGSKQAFFLKHEGYLGAMGAFLSASRHSSTKKTST.

It belongs to the type II pantothenate kinase family.

The protein resides in the cytoplasm. The protein localises to the nucleus. The catalysed reaction is (R)-pantothenate + ATP = (R)-4'-phosphopantothenate + ADP + H(+). The protein operates within cofactor biosynthesis; coenzyme A biosynthesis; CoA from (R)-pantothenate: step 1/5. Its activity is regulated as follows. Regulated by feedback inhibition by malonyl-CoA. Plays a role in the physiological regulation of the intracellular CoA concentration. The protein is Pantothenate kinase CAB1 (CAB1) of Saccharomyces cerevisiae (strain ATCC 204508 / S288c) (Baker's yeast).